We begin with the raw amino-acid sequence, 194 residues long: Potassium-transporting ATPase KdpC subunit (194 aa).

A helical transmembrane segment spans residues 12 to 34; sequence LFLLLLTGGVYPLLTTALGQWWF.

This sequence belongs to the KdpC family. As to quaternary structure, the system is composed of three essential subunits: KdpA, KdpB and KdpC.

It is found in the cell inner membrane. Part of the high-affinity ATP-driven potassium transport (or Kdp) system, which catalyzes the hydrolysis of ATP coupled with the electrogenic transport of potassium into the cytoplasm. This subunit acts as a catalytic chaperone that increases the ATP-binding affinity of the ATP-hydrolyzing subunit KdpB by the formation of a transient KdpB/KdpC/ATP ternary complex. The chain is Potassium-transporting ATPase KdpC subunit from Salmonella schwarzengrund (strain CVM19633).